We begin with the raw amino-acid sequence, 142 residues long: Hemoglobin subunit alpha (142 aa).

One can recognise a Globin domain in the interval 2 to 142; that stretch reads VLSPADKTNV…VSTVLTSKYR (141 aa). S4 carries the post-translational modification Phosphoserine. Residue K8 is modified to N6-succinyllysine. A Phosphothreonine modification is found at T9. At K12 the chain carries N6-succinyllysine. K17 carries the post-translational modification N6-acetyllysine; alternate. An N6-succinyllysine; alternate modification is found at K17. The residue at position 25 (Y25) is a Phosphotyrosine. Position 36 is a phosphoserine (S36). The residue at position 41 (K41) is an N6-succinyllysine. S50 carries the post-translational modification Phosphoserine. H59 is a binding site for O2. H88 is a heme b binding site. A Phosphoserine modification is found at S103. Residue T109 is modified to Phosphothreonine. A phosphoserine mark is found at S125 and S132. Phosphothreonine is present on residues T135 and T138. S139 bears the Phosphoserine mark.

Belongs to the globin family. Heterotetramer of two alpha chains and two beta chains. As to expression, red blood cells.

In terms of biological role, involved in oxygen transport from the lung to the various peripheral tissues. Hemopressin acts as an antagonist peptide of the cannabinoid receptor CNR1. Hemopressin-binding efficiently blocks cannabinoid receptor CNR1 and subsequent signaling. In Piliocolobus badius (Western red colobus), this protein is Hemoglobin subunit alpha (HBA).